The chain runs to 504 residues: Subtilisin-like protease 1 (504 aa).

A signal peptide spans 1-19 (MGVFRFISISLAAVSAANA). A propeptide spanning residues 20–116 (AQILSMPHAQ…VEPDTIVSVH (97 aa)) is cleaved from the precursor. The Inhibitor I9 domain occupies 34-116 (SYIVMMKDDT…VEPDTIVSVH (83 aa)). A Peptidase S8 domain is found at 126-400 (SWGLARISNP…NVLINNGGAK (275 aa)). Active-site charge relay system residues include aspartate 158 and histidine 190. Residues 172-198 (AIWGSNQVNDGDDRDGSGHGTHTSGTM) are disordered. Asparagine 233 and asparagine 251 each carry an N-linked (GlcNAc...) asparagine glycan. Residues 282-294 (NDNQDAQSSSPAS) are compositionally biased toward polar residues. The segment at 282-312 (NDNQDAQSSSPASEPSVCTVGSSAEDDSRSS) is disordered. The active-site Charge relay system is the serine 345. The segment covering 378 to 394 (TSSITDAGPGTPTNVLI) has biased composition (polar residues). The interval 378–483 (TSSITDAGPG…YPGGDNFDFD (106 aa)) is disordered. 2 stretches are compositionally biased toward pro residues: residues 405–449 (NPNP…PGQP) and 457–473 (APAP…PHTP).

It belongs to the peptidase S8 family.

Its subcellular location is the secreted. In terms of biological role, secreted subtilisin-like serine protease with keratinolytic activity that contributes to pathogenicity. This Trichophyton rubrum (Athlete's foot fungus) protein is Subtilisin-like protease 1 (SUB1).